Here is a 401-residue protein sequence, read N- to C-terminus: Adenylosuccinate synthetase (401 aa).

Residues 12–18 (GDEGKGK) and 40–42 (GHT) each bind GTP. Aspartate 13 (proton acceptor) is an active-site residue. Residues aspartate 13 and glycine 40 each coordinate Mg(2+). IMP contacts are provided by residues 13–16 (DEGK), 38–41 (NAGH), threonine 128, arginine 142, glutamine 212, threonine 227, and arginine 290. The active-site Proton donor is histidine 41. 286–292 (ATTRRPR) is a binding site for substrate. Residues arginine 292, 318–320 (KAD), and 390–392 (STG) each bind GTP.

The protein belongs to the adenylosuccinate synthetase family. As to quaternary structure, homodimer. Requires Mg(2+) as cofactor.

Its subcellular location is the cytoplasm. It carries out the reaction IMP + L-aspartate + GTP = N(6)-(1,2-dicarboxyethyl)-AMP + GDP + phosphate + 2 H(+). It functions in the pathway purine metabolism; AMP biosynthesis via de novo pathway; AMP from IMP: step 1/2. Plays an important role in the de novo pathway of purine nucleotide biosynthesis. Catalyzes the first committed step in the biosynthesis of AMP from IMP. In Pseudothermotoga lettingae (strain ATCC BAA-301 / DSM 14385 / NBRC 107922 / TMO) (Thermotoga lettingae), this protein is Adenylosuccinate synthetase.